Here is a 423-residue protein sequence, read N- to C-terminus: Guanine nucleotide-binding protein subunit beta (423 aa).

7 WD repeats span residues 90-120, 132-162, 179-208, 220-256, 268-298, 348-377, and 389-419; these read GHNN…LIWD, LDSQ…TIYR, GHTC…ALWD, DHLG…YIWD, VNDS…NMYD, DNQG…VVWD, and GHGG…KIWS.

Belongs to the WD repeat G protein beta family. In terms of assembly, g proteins are composed of 3 units, alpha, beta and gamma. The beta-gamma subunit complex (STE4-STE18 complex) interacts with PLP1 and PLP2. Interacts with SYG1.

Implicated in the a- and alpha-factor response pathway. The beta and gamma chains of the putative yeast mating response pathway G protein play a positive role in initiation of the mating response. The beta and gamma chains are required for the GTPase activity, for replacement of GDP by GTP, and for G protein-effector interaction. The protein is Guanine nucleotide-binding protein subunit beta (STE4) of Saccharomyces cerevisiae (strain ATCC 204508 / S288c) (Baker's yeast).